Reading from the N-terminus, the 86-residue chain is Insulin (86 aa).

Intrachain disulfides connect Cys-7/Cys-72, Cys-19/Cys-85, and Cys-71/Cys-76. Positions 33–63 (EAEDPQVGEVELGGGPGLGGLQPLALAGPQQ) are cleaved as a propeptide — c peptide.

It belongs to the insulin family. Heterodimer of a B chain and an A chain linked by two disulfide bonds.

It localises to the secreted. Insulin decreases blood glucose concentration. It increases cell permeability to monosaccharides, amino acids and fatty acids. It accelerates glycolysis, the pentose phosphate cycle, and glycogen synthesis in liver. This Equus caballus (Horse) protein is Insulin (INS).